Reading from the N-terminus, the 538-residue chain is MTDIGILPAPAIAYGALSPMLIMFGVAVVSVLVEAFVPRGHRLRTQLALATVGILGAFVAVVALSGSHQVVMNGAVAIDGPTLYLQGLILVASGLALVVMAQRRTVAAVPSAVGAGAGGGLDSFAAQASSVPGSEPERVLNRTGITQTEIFPLTLFAIAGMMLFPACNDLLTMFVALEVFSLPLYVMCALARRRRLLSQESALKYFLLGAFSSAFFLFGSAFVYGYAGTVELDAVARAVDADAGERSFLLLGVAMLSVGLLFKVGAVPFHFWVPDVYQGAPTPVTAFMAATTKIAAFGALLRVLYVALPGITTDWRPVLWGVAIATMLIGSIGAVTQTDVKRMLAYSAVAHTGFLLTGVAAANERGVSSTLFYLAAYGFSTVGAFIIAGLVRSGNADDGADGDYKDDDEVTDLRRWAGVGRRAPVLGIVFALFLLAFAGIPLTSGFVSKFAVFEAAAAGGAMPLVVVGVMCSAIAAYFYVRVIVVMFFADPVEDSGVLRIPGPAVTVSIAVSALITVLLGVAPQPLLDLVENLADFVT.

The next 14 helical transmembrane spans lie at 12-32, 47-67, 81-101, 144-164, 170-190, 205-225, 248-268, 294-314, 317-337, 343-363, 371-391, 423-443, 472-492, and 502-522; these read IAYGALSPMLIMFGVAVVSVL, LALATVGILGAFVAVVALSGS, PTLYLQGLILVASGLALVVMA, GITQTEIFPLTLFAIAGMMLF, LLTMFVALEVFSLPLYVMCAL, YFLLGAFSSAFFLFGSAFVYG, FLLLGVAMLSVGLLFKVGAVP, IAAFGALLRVLYVALPGITTD, PVLWGVAIATMLIGSIGAVTQ, MLAYSAVAHTGFLLTGVAAAN, LFYLAAYGFSTVGAFIIAGLV, APVLGIVFALFLLAFAGIPLT, SAIAAYFYVRVIVVMFFADPV, and GPAVTVSIAVSALITVLLGVA.

It belongs to the complex I subunit 2 family. As to quaternary structure, NDH-1 is composed of 14 different subunits. Subunits NuoA, H, J, K, L, M, N constitute the membrane sector of the complex.

It localises to the cell membrane. The catalysed reaction is a quinone + NADH + 5 H(+)(in) = a quinol + NAD(+) + 4 H(+)(out). NDH-1 shuttles electrons from NADH, via FMN and iron-sulfur (Fe-S) centers, to quinones in the respiratory chain. The immediate electron acceptor for the enzyme in this species is believed to be a menaquinone. Couples the redox reaction to proton translocation (for every two electrons transferred, four hydrogen ions are translocated across the cytoplasmic membrane), and thus conserves the redox energy in a proton gradient. This chain is NADH-quinone oxidoreductase subunit N, found in Mycobacteroides abscessus (strain ATCC 19977 / DSM 44196 / CCUG 20993 / CIP 104536 / JCM 13569 / NCTC 13031 / TMC 1543 / L948) (Mycobacterium abscessus).